The following is a 62-amino-acid chain: uncharacterized protein (62 aa).

The tract at residues 38–62 (VKSESDTADSKRSAEAKADEAPAKM) is disordered.

This is an uncharacterized protein from Schizosaccharomyces pombe (strain 972 / ATCC 24843) (Fission yeast).